Consider the following 1682-residue polypeptide: Collagen alpha-4(IV) chain (1682 aa).

Residues M1–G32 form the signal peptide. The segment at S31–R56 is 7S domain. N-linked (GlcNAc...) asparagine glycosylation is present at N43. Disordered stretches follow at residues R56 to P255 and P379 to G1453. Positions G57–G1451 are triple-helical region. Positions R86–D88 match the Cell attachment site motif. Over residues P103 to P116 the composition is skewed to low complexity. N-linked (GlcNAc...) asparagine glycosylation is present at N134. 2 short sequence motifs (cell attachment site) span residues R137–D139 and R181–D183. A compositionally biased stretch (pro residues) spans M396 to F410. A compositionally biased stretch (low complexity) spans P411 to K426. The span at P487–P500 shows a compositional bias: pro residues. A compositionally biased stretch (basic and acidic residues) spans D578–P601. 2 short sequence motifs (cell attachment site) span residues R587–D589 and R593–D595. Over residues L609 to P621 the composition is skewed to pro residues. Residues Q632–F647 show a composition bias toward low complexity. N661 is a glycosylation site (N-linked (GlcNAc...) asparagine). Over residues P665–F682 the composition is skewed to low complexity. The Cell attachment site signature appears at R716–D718. 2 stretches are compositionally biased toward low complexity: residues P742–D758 and P857–L902. Composition is skewed to basic and acidic residues over residues E911–E929 and D938–L950. Over residues G969 to G978 the composition is skewed to gly residues. 2 short sequence motifs (cell attachment site) span residues R980 to D982 and R992 to D994. The span at D998–I1010 shows a compositional bias: low complexity. The segment covering D1011–S1025 has biased composition (pro residues). Positions F1034–P1044 are enriched in low complexity. The Cell attachment site motif lies at R1144 to D1146. Composition is skewed to pro residues over residues P1223–A1235, D1248–S1272, P1289–Q1304, P1340–P1351, and A1435–D1444. In terms of domain architecture, Collagen IV NC1 spans G1457–S1682. 6 disulfides stabilise this stretch: C1472-C1561, C1505-C1558, C1517-C1523, C1580-C1678, C1614-C1675, and C1626-C1633.

It belongs to the type IV collagen family. In terms of assembly, there are six type IV collagen isoforms, alpha 1(IV)-alpha 6(IV), each of which can form a triple helix structure with 2 other chains to generate type IV collagen network. The alpha 3(IV) chain forms a triple helical protomer with alpha 4(IV) and alpha 5(IV); this triple helical structure dimerizes through NC1-NC1 domain interactions such that the alpha 3(IV), alpha 4(IV) and alpha 5(IV) chains of one protomer connect with the alpha 5(IV), alpha 4(IV) and alpha 3(IV) chains of the opposite protomer, respectively. Associates with LAMB2 at the neuromuscular junction and in GBM. Prolines at the third position of the tripeptide repeating unit (G-X-Y) are hydroxylated in some or all of the chains. In terms of processing, type IV collagens contain numerous cysteine residues which are involved in inter- and intramolecular disulfide bonding. 12 of these, located in the NC1 domain, are conserved in all known type IV collagens. Post-translationally, the trimeric structure of the NC1 domains is stabilized by covalent bonds between Lys and Met residues. As to expression, expressed in Bruch's membrane, outer plexiform layer, inner nuclear layer, inner plexiform layer, ganglion cell layer, inner limiting membrane and around the blood vessels of the retina (at protein level). Highly expressed in kidney and lung. Detected at lower levels in heart, muscle and skin.

The protein localises to the secreted. It localises to the extracellular space. The protein resides in the extracellular matrix. Its subcellular location is the basement membrane. Functionally, type IV collagen is the major structural component of glomerular basement membranes (GBM), forming a 'chicken-wire' meshwork together with laminins, proteoglycans and entactin/nidogen. The chain is Collagen alpha-4(IV) chain from Mus musculus (Mouse).